The sequence spans 1136 residues: Nuclear pore complex protein Nup133 (1136 aa).

Residues 1 to 26 are disordered; the sequence is MFSPRGTPGSGRRQAPRTGGRRSVSA.

The protein belongs to the nucleoporin Nup133 family. Forms part of the Nup160 subcomplex in the nuclear pore which is composed of NUP160, NUP133, NUP107 and Nup96. This complex plays a role in RNA export and in tethering Nup98 and NUP153 to the nucleus. Widely expressed in the embryo and in adult tissues. Higher expression is observed in the brain, testes, ovary, skin, and kidney.

The protein localises to the nucleus. The protein resides in the nuclear pore complex. Its subcellular location is the chromosome. It is found in the centromere. It localises to the kinetochore. In terms of biological role, involved in poly(A)+ RNA transport. Involved in nephrogenesis. The chain is Nuclear pore complex protein Nup133 from Danio rerio (Zebrafish).